Reading from the N-terminus, the 221-residue chain is Small ribosomal subunit protein eS8 (221 aa).

Disordered stretches follow at residues 1–41 (MGIS…LSSN) and 128–169 (TPAA…TLDP). Residues 8–26 (MHKRRATGGKQKAWRKKRK) are compositionally biased toward basic residues. Over residues 146-169 (EETKKSNHVTRKLEKRKEGRTLDP) the composition is skewed to basic and acidic residues.

Belongs to the eukaryotic ribosomal protein eS8 family.

The chain is Small ribosomal subunit protein eS8 (RPS8) from Zea mays (Maize).